A 546-amino-acid chain; its full sequence is DNA replication factor Cdt1 (546 aa).

Residues 1–11 (MEQRRVTDFFA) are compositionally biased toward basic and acidic residues. The PIP-box K+4 motif signature appears at 1-23 (MEQRRVTDFFARRRPGPPRIAPP). 2 disordered regions span residues 1 to 118 (MEQR…QDQD) and 143 to 165 (SAQDAGESCTPEAEGRPEEPCGE). Positions 28-45 (RTPSPARPALRAPASATS) are enriched in low complexity. T29 bears the Phosphothreonine; by MAPK8 mark. S31 is subject to Phosphoserine. The Cyclin-binding motif motif lies at 68 to 70 (RRL). A Phosphoserine; by MAPK8 modification is found at S93. The tract at residues 150 to 190 (SCTPEAEGRPEEPCGEKAPAYQRFHALAQPGLPGLVLPYKY) is interaction with GMNN. A compositionally biased stretch (basic and acidic residues) spans 155–164 (AEGRPEEPCG). S318 carries the phosphoserine; by MAPK8 modification. Phosphoserine is present on residues S380 and S394. The interval 383 to 415 (ALRSAAPSSPGSPRPALPATPPATPPAASPSAL) is disordered. The segment covering 392 to 410 (PGSPRPALPATPPATPPAA) has biased composition (pro residues). Residues 451–546 (LERLPELARV…AHQTRAEEGL (96 aa)) are interaction with LRWD1.

It belongs to the Cdt1 family. Interacts with GMNN; the interaction inhibits binding of the MCM complex to origins of replication. Interacts with MCM6. Interacts with CDC6; are mutually dependent on one another for loading MCM complexes onto chromatin. Interacts with PCNA. Interacts with LRWD1 during G1 phase and during mitosis. Interacts with NDC80 subunit of the NDC80 complex; leading to kinetochore localization. Interacts with GRWD1; origin binding of GRWD1 is dependent on CDT1. Interacts with KAT7. Interacts with ubiquitin-binding protein FAF1; the interaction is likely to promote CDT1 degradation. In terms of processing, two independent E3 ubiquitin ligase complexes, SCF(SKP2) and the DCX(DTL) complex, mediated CDT1 degradation in S phase. Ubiquitinated by the DCX(DTL) complex, in response to DNA damage, leading to its degradation. Ubiquitination by the DCX(DTL) complex is necessary to ensure proper cell cycle regulation and is PCNA-dependent: interacts with PCNA via its PIP-box, while the presence of the containing the 'K+4' motif in the PIP box, recruit the DCX(DTL) complex, leading to its degradation. Phosphorylation at Thr-29 by CDK2 targets CDT1 for ubiquitination by SCF(SKP2) E3 ubiquitin ligase and subsequent degradation. The interaction with GMNN protects it against ubiquitination. Deubiquitinated by USP37. Ubiquitinated and degraded by the SCF(FBXO31) complex during the G2 phase to prevent re-replication. Phosphorylation by cyclin A-dependent kinases at Thr-29 targets CDT1 for ubiquitynation by SCF(SKP2) E3 ubiquitin ligase and subsequent degradation. Phosphorylated at Thr-29 by MAPK8/JNK1, which blocks replication licensing in response to stress. Binding to GMNN is not affected by phosphorylation.

The protein localises to the nucleus. The protein resides in the chromosome. It is found in the centromere. Its subcellular location is the kinetochore. In terms of biological role, required for both DNA replication and mitosis. DNA replication licensing factor, required for pre-replication complex assembly. Cooperates with CDC6 and the origin recognition complex (ORC) during G1 phase of the cell cycle to promote the loading of the mini-chromosome maintenance (MCM) complex onto DNA to generate pre-replication complexes (pre-RC). Required also for mitosis by promoting stable kinetochore-microtubule attachments. Potential oncogene. The sequence is that of DNA replication factor Cdt1 from Homo sapiens (Human).